The primary structure comprises 345 residues: HTH-type transcriptional regulator reg1 (345 aa).

In terms of domain architecture, HTH lacI-type spans 1-58 (MTTRLADIAAQAGVSEATVSRVLNGKPGVAATTRQSVLAALDVLGYERPVRLRRRSAG). Positions 5–24 (LADIAAQAGVSEATVSRVLN) form a DNA-binding region, H-T-H motif.

Transcription repressor involved in control of expression of alpha-amylase and chitinase genes and of actinorhodin production. This chain is HTH-type transcriptional regulator reg1 (reg1), found in Streptomyces lividans.